A 73-amino-acid chain; its full sequence is uncharacterized protein (73 aa).

The interval 48-73 (AKEPEKKTPSMEAKATSLSPNKASAS) is disordered. Polar residues predominate over residues 63–73 (TSLSPNKASAS).

This is an uncharacterized protein from Saccharomyces cerevisiae (strain ATCC 204508 / S288c) (Baker's yeast).